A 138-amino-acid chain; its full sequence is Protein PsiE homolog (138 aa).

4 helical membrane passes run 12 to 34, 56 to 76, 84 to 104, and 109 to 129; these read YLLQALLNVCLFFLALALSALLI, YEMLGELLIFFMYFEFIALII, HFPLRYFIYIGITAVIRLIII, and AISTFWWAMAILAMICGFFIA.

Belongs to the PsiE family.

It localises to the cell membrane. In Bacillus subtilis (strain 168), this protein is Protein PsiE homolog.